Reading from the N-terminus, the 343-residue chain is Programmed cell death protein 2 (343 aa).

Residues Cys-134, Cys-137, Cys-145, Cys-148, Cys-154, His-158, His-167, and Cys-171 each contribute to the Zn(2+) site. An MYND-type; atypical zinc finger spans residues 134–171; it reads CRVCGCLAPMTCSRCKQAHYCSKEHQTLDWQLGHKQAC.

In terms of processing, ubiquitinated by PRKN, promoting proteasomal degradation.

The protein localises to the nucleus. Its function is as follows. May be a DNA-binding protein with a regulatory function. May play an important role in cell death and/or in regulation of cell proliferation. In Rattus norvegicus (Rat), this protein is Programmed cell death protein 2 (Pdcd2).